The sequence spans 215 residues: Probable GTP-binding protein EngB (215 aa).

The EngB-type G domain maps to 31-215 (GPPEIAFAGR…RAAILQAIAV (185 aa)). GTP contacts are provided by residues 39 to 46 (GRSNVGKS), 66 to 70 (GRTQE), 93 to 96 (DMPG), 160 to 163 (TKSD), and 194 to 196 (TSS). S46 and T68 together coordinate Mg(2+).

Belongs to the TRAFAC class TrmE-Era-EngA-EngB-Septin-like GTPase superfamily. EngB GTPase family. Mg(2+) is required as a cofactor.

Its function is as follows. Necessary for normal cell division and for the maintenance of normal septation. This chain is Probable GTP-binding protein EngB, found in Bartonella quintana (strain Toulouse) (Rochalimaea quintana).